Reading from the N-terminus, the 20-residue chain is MKLIAKTRILNTLVFSAAGK.

The polypeptide is 26 kDa protein (Bacillus cereus).